Reading from the N-terminus, the 208-residue chain is Small ribosomal subunit protein uS4 (208 aa).

The S4 RNA-binding domain occupies 95–157 (RRIDNVVYRA…DSLKKLVRSN (63 aa)).

Belongs to the universal ribosomal protein uS4 family. As to quaternary structure, part of the 30S ribosomal subunit. Contacts protein S5. The interaction surface between S4 and S5 is involved in control of translational fidelity.

Its function is as follows. One of the primary rRNA binding proteins, it binds directly to 16S rRNA where it nucleates assembly of the body of the 30S subunit. Functionally, with S5 and S12 plays an important role in translational accuracy. The sequence is that of Small ribosomal subunit protein uS4 from Borrelia hermsii (strain HS1 / DAH).